The primary structure comprises 319 residues: Ferrochelatase (319 aa).

Positions 193 and 274 each coordinate Fe cation.

This sequence belongs to the ferrochelatase family.

It localises to the cytoplasm. The catalysed reaction is heme b + 2 H(+) = protoporphyrin IX + Fe(2+). It functions in the pathway porphyrin-containing compound metabolism; protoheme biosynthesis; protoheme from protoporphyrin-IX: step 1/1. Functionally, catalyzes the ferrous insertion into protoporphyrin IX. This chain is Ferrochelatase, found in Erwinia tasmaniensis (strain DSM 17950 / CFBP 7177 / CIP 109463 / NCPPB 4357 / Et1/99).